We begin with the raw amino-acid sequence, 378 residues long: Alkaline elastase YaB (378 aa).

Residues 1–27 (MNKKMGKIVAGTALIISVAFSSSIAQA) form the signal peptide. Residues 28-110 (AEEAKEKYLI…IEEDAEVTTM (83 aa)) constitute a propeptide that is removed on maturation. Ca(2+) is bound at residue glutamine 111. A Peptidase S8 domain is found at 114–377 (PWGINRVQAP…SGLVNAEAAT (264 aa)). The active-site Charge relay system is the aspartate 141. Aspartate 149 serves as a coordination point for Ca(2+). Residue histidine 171 is the Charge relay system of the active site. Positions 182, 184, 186, 188, 272, 274, and 277 each coordinate Ca(2+). Serine 324 functions as the Charge relay system in the catalytic mechanism.

This sequence belongs to the peptidase S8 family. Requires Ca(2+) as cofactor.

The protein localises to the secreted. Digests elastin efficiently, has a substrate preference for Ala in P1 position. The sequence is that of Alkaline elastase YaB (ale) from Bacillus sp. (strain YaB).